Here is a 309-residue protein sequence, read N- to C-terminus: Cilia-and flagella-associated protein 96 (309 aa).

The interval 220-249 (EEKKKTISNTFKPSSPGKKPGGMKAGTFDP) is disordered.

This sequence belongs to the CFAP96 family. As to expression, detected in testis and fetal liver.

It is found in the cytoplasm. Its subcellular location is the cytoskeleton. It localises to the microtubule organizing center. The protein resides in the centrosome. This Homo sapiens (Human) protein is Cilia-and flagella-associated protein 96.